Reading from the N-terminus, the 287-residue chain is Ribosomal RNA small subunit methyltransferase I (287 aa).

This sequence belongs to the methyltransferase superfamily. RsmI family.

Its subcellular location is the cytoplasm. It carries out the reaction cytidine(1402) in 16S rRNA + S-adenosyl-L-methionine = 2'-O-methylcytidine(1402) in 16S rRNA + S-adenosyl-L-homocysteine + H(+). Functionally, catalyzes the 2'-O-methylation of the ribose of cytidine 1402 (C1402) in 16S rRNA. The protein is Ribosomal RNA small subunit methyltransferase I of Helicobacter pylori (strain ATCC 700392 / 26695) (Campylobacter pylori).